A 131-amino-acid polypeptide reads, in one-letter code: uncharacterized protein (131 aa).

Residues 16–71 (MSEQERDEVLEDDDDDEDNKSSQQERDEFVEDDDNNSIQSSPSCAQPLLTQYHDDG) form a disordered region. The segment covering 20 to 33 (ERDEVLEDDDDDED) has biased composition (acidic residues).

This is an uncharacterized protein from Dictyostelium discoideum (Social amoeba).